Reading from the N-terminus, the 132-residue chain is L-ectoine synthase (132 aa).

It belongs to the ectoine synthase family.

It carries out the reaction (2S)-4-acetamido-2-aminobutanoate = L-ectoine + H2O. Its pathway is amine and polyamine biosynthesis; ectoine biosynthesis; L-ectoine from L-aspartate 4-semialdehyde: step 3/3. Its function is as follows. Catalyzes the circularization of gamma-N-acetyl-alpha,gamma-diaminobutyric acid (ADABA) to ectoine (1,4,5,6-tetrahydro-2-methyl-4-pyrimidine carboxylic acid), which is an excellent osmoprotectant. The polypeptide is L-ectoine synthase (Teredinibacter turnerae (strain ATCC 39867 / T7901)).